Here is a 2460-residue protein sequence, read N- to C-terminus: Reducing polyketide synthase BOA6 (2460 aa).

Positions 5–438 (NEPIAVIGTG…GTNAHAILES (434 aa)) constitute a Ketosynthase family 3 (KS3) domain. Active-site for beta-ketoacyl synthase activity residues include Cys-178, His-317, and His-360. The malonyl-CoA:ACP transacylase (MAT) domain stretch occupies residues 549–864 (VFTGQGAQWP…PYTGVLSRGD (316 aa)). Positions 938-1073 (HELLGVRCAD…GRIKMTLGTP (136 aa)) are N-terminal hotdog fold. Residues 938–1244 (HELLGVRCAD…QMQSFTAARP (307 aa)) form a dehydratase (DH) domain region. Residues 938 to 1245 (HELLGVRCAD…MQSFTAARPS (308 aa)) enclose the PKS/mFAS DH domain. The active-site Proton acceptor; for dehydratase activity is the His-970. The C-terminal hotdog fold stretch occupies residues 1088–1245 (LGPLNVDRFY…MQSFTAARPS (158 aa)). The active-site Proton donor; for dehydratase activity is the Asp-1145. Positions 1399–1586 (NKFVTAAMKK…VNDFKDKSRY (188 aa)) are methyltransferase (MT) domain. Positions 2098–2266 (SYLLAGLTGD…KRGGVASVIH (169 aa)) are ketoreductase (KR) domain. The region spanning 2378–2456 (DEVLGVMQKC…DLCELACEEY (79 aa)) is the Carrier domain. Ser-2416 is subject to O-(pantetheine 4'-phosphoryl)serine.

The protein operates within polyketide biosynthesis. Reducing polyketide synthase; part of the gene cluster A that mediates the biosynthesis of botcinic acid and its botcinin derivatives, acetate-derived polyketides that contribute to virulence when combined with the sesquiterpene botrydial. Botcinic acid and its derivatives have been shown to induce chlorosis and necrosis during host plant infection, but also have antifungal activities. Two polyketide synthases, BOA6 and BOA9, are involved in the biosynthesis of botcinins. BOA6 mediates the formation of the per-methylated tetraketide core by condensation of four units of malonyl-CoA with one unit of acetyl-CoA, which would be methylated in activated methylene groups to yield a bicyclic acid intermediate that could then either be converted to botrylactone derivatives or lose the starter acetate unit through a retro-Claisen type C-C bond cleavage to yield botcinin derivatives. The second polyketide synthase, BOA9, is probably required for the biosynthesis of the tetraketide side chain of botcinins. The methyltransferase (MT) domain within BOA6 is probably responsible for the incorporation of four methyl groups. The trans-enoyl reductase BOA5 might take over the enoyl reductase function of BOA6 that misses an ER domain. The monooxygenases BOA2, BOA3 and BOA4 might be involved in further hydroxylations at C4, C5 and C8, whereas BOA7, close to BOA9, could potentially be involved in the hydroxylation at C4 in the side chain of botcinins. This Botryotinia fuckeliana (strain B05.10) (Noble rot fungus) protein is Reducing polyketide synthase BOA6.